An 877-amino-acid polypeptide reads, in one-letter code: EF-hand domain-containing family member B (877 aa).

Disordered regions lie at residues 1 to 47 (MCSF…GRKS) and 268 to 290 (AQQPEEQREAENTEPGVEPPDRI). EF-hand domains are found at residues 605–640 (QNFDTLLAAFRHYDKKGDGVIDRAELQEACDQACLH) and 641–676 (LDEKLLDQLFEYCDVDKDGLINYLEFANFLTWKDKT). Residues Asp-618, Asp-622, Glu-629, Asp-654, Asp-656, Asp-658, and Glu-665 each coordinate Ca(2+).

Microtubule inner protein component of sperm flagellar doublet microtubules. Interacts with STIM1 and ORAI1; the interactions take place upon Ca(2+)-store depletion and dissociate through a Ca(2+)-dependent mechanism. Interaction with STIM1 inhibits STIM1 interaction with SARAF. Expressed in trachea multiciliated cells.

It is found in the cytoplasm. It localises to the cytoskeleton. The protein localises to the cilium axoneme. The protein resides in the flagellum axoneme. Its function is as follows. Microtubule inner protein (MIP) part of the dynein-decorated doublet microtubules (DMTs) in cilia axoneme, which is required for motile cilia beating. Cytosolic sensor for calcium, modulates the interaction of STIM1 and ORAI1 upon store depletion and the activation of store-operated Ca(2+) entry (SOCE) and NFAT translocation from cytosol to nucleus. The protein is EF-hand domain-containing family member B of Bos taurus (Bovine).